Reading from the N-terminus, the 379-residue chain is Cytochrome b (379 aa).

4 helical membrane-spanning segments follow: residues 33 to 53, 77 to 98, 113 to 133, and 178 to 198; these read FGSLLGICLGLQIITGLFLAM, WLIRYLHANGASMFFILLYLHI, WNIGILLLFAVMATAFMGYVL, and FFAFHFILPFIIPALVMIHFF. Heme b-binding residues include His-83 and His-97. The heme b site is built by His-182 and His-196. His-201 provides a ligand contact to a ubiquinone. Transmembrane regions (helical) follow at residues 226–246, 288–308, 320–340, and 347–367; these read IKDIMGLLIMMLALMSLVLFS, LGGVLALVLSILVLALFPMLH, FSQCLLWMLTANLFILTWIGG, and YITIGQLASINYFFTILIVSR.

This sequence belongs to the cytochrome b family. In terms of assembly, the cytochrome bc1 complex contains 11 subunits: 3 respiratory subunits (MT-CYB, CYC1 and UQCRFS1), 2 core proteins (UQCRC1 and UQCRC2) and 6 low-molecular weight proteins (UQCRH/QCR6, UQCRB/QCR7, UQCRQ/QCR8, UQCR10/QCR9, UQCR11/QCR10 and a cleavage product of UQCRFS1). This cytochrome bc1 complex then forms a dimer. Heme b serves as cofactor.

Its subcellular location is the mitochondrion inner membrane. Component of the ubiquinol-cytochrome c reductase complex (complex III or cytochrome b-c1 complex) that is part of the mitochondrial respiratory chain. The b-c1 complex mediates electron transfer from ubiquinol to cytochrome c. Contributes to the generation of a proton gradient across the mitochondrial membrane that is then used for ATP synthesis. The chain is Cytochrome b (MT-CYB) from Dolichotis patagonum (Patagonian mara).